A 133-amino-acid polypeptide reads, in one-letter code: Small ribosomal subunit protein uS11 (133 aa).

Belongs to the universal ribosomal protein uS11 family. In terms of assembly, part of the 30S ribosomal subunit. Interacts with proteins S7 and S18. Binds to IF-3.

In terms of biological role, located on the platform of the 30S subunit, it bridges several disparate RNA helices of the 16S rRNA. Forms part of the Shine-Dalgarno cleft in the 70S ribosome. The polypeptide is Small ribosomal subunit protein uS11 (Ralstonia nicotianae (strain ATCC BAA-1114 / GMI1000) (Ralstonia solanacearum)).